The primary structure comprises 159 residues: Putative 4-hydroxy-4-methyl-2-oxoglutarate aldolase (159 aa).

Residues 74–77 and R96 contribute to the substrate site; that span reads GDNL. D97 is a binding site for a divalent metal cation.

This sequence belongs to the class II aldolase/RraA-like family. In terms of assembly, homotrimer. Requires a divalent metal cation as cofactor.

It carries out the reaction 4-hydroxy-4-methyl-2-oxoglutarate = 2 pyruvate. The enzyme catalyses oxaloacetate + H(+) = pyruvate + CO2. Catalyzes the aldol cleavage of 4-hydroxy-4-methyl-2-oxoglutarate (HMG) into 2 molecules of pyruvate. Also contains a secondary oxaloacetate (OAA) decarboxylase activity due to the common pyruvate enolate transition state formed following C-C bond cleavage in the retro-aldol and decarboxylation reactions. This is Putative 4-hydroxy-4-methyl-2-oxoglutarate aldolase from Bacillus cereus (strain ZK / E33L).